The chain runs to 411 residues: Flavohemoprotein (411 aa).

Residues 5 to 142 (TLSQETKQIV…IADVFIQVEK (138 aa)) enclose the Globin domain. Residue H89 participates in heme b binding. Residues Y99 and E141 each act as charge relay system in the active site. The segment at 153-411 (GGWREFRSFV…FGPAGTLASS (259 aa)) is reductase. Residues 156–267 (REFRSFVVEK…TAPAGDFTLQ (112 aa)) form the FAD-binding FR-type domain. FAD is bound by residues Y194 and 210-213 (RQYS). 280 to 285 (GVGITP) is a binding site for NADP(+). 401–404 (FFGP) is an FAD binding site.

This sequence belongs to the globin family. Two-domain flavohemoproteins subfamily. In the C-terminal section; belongs to the flavoprotein pyridine nucleotide cytochrome reductase family. Heme b serves as cofactor. The cofactor is FAD.

It carries out the reaction 2 nitric oxide + NADPH + 2 O2 = 2 nitrate + NADP(+) + H(+). The enzyme catalyses 2 nitric oxide + NADH + 2 O2 = 2 nitrate + NAD(+) + H(+). In terms of biological role, is involved in NO detoxification in an aerobic process, termed nitric oxide dioxygenase (NOD) reaction that utilizes O(2) and NAD(P)H to convert NO to nitrate, which protects the bacterium from various noxious nitrogen compounds. Therefore, plays a central role in the inducible response to nitrosative stress. The sequence is that of Flavohemoprotein from Halalkalibacterium halodurans (strain ATCC BAA-125 / DSM 18197 / FERM 7344 / JCM 9153 / C-125) (Bacillus halodurans).